Consider the following 148-residue polypeptide: General odorant-binding protein 69a (148 aa).

The N-terminal stretch at 1 to 23 (MVARHFSFFLALLILYDLIPSNQ) is a signal peptide. 3 cysteine pairs are disulfide-bonded: C42-C74, C70-C121, and C112-C130.

This sequence belongs to the PBP/GOBP family. In terms of tissue distribution, expressed in the antenna, mostly on the anterior surface of the third antennal segment. Expressed in auxiliary cells and the third antennal segment and exported to the sensillar lymph (at protein level).

It is found in the secreted. Functionally, odorant-binding protein required for olfactory behavior and activity of pheromone-sensitive neurons in response to the male-specific pheromone cis-vaccenyl acetate (cVA). Modulates social responsivity differently in males and females, regulating male aggression and female receptivity respectively. This is General odorant-binding protein 69a (Obp69a) from Drosophila melanogaster (Fruit fly).